Consider the following 738-residue polypeptide: Ethylene receptor (738 aa).

3 helical membrane passes run 22 to 42, 53 to 73, and 91 to 111; these read ISDFFIAVAYFSIPIELVYFV, VLVQFGAFIVLCGATHLINLW, and VLTAVVSCATALMLVHIIPDL. 2 residues coordinate Cu cation: Cys64 and His68. Residues 157–305 form the GAF domain; that stretch reads DRHTILKTTL…VVADQVAVAL (149 aa). The region spanning 348–585 is the Histidine kinase domain; the sequence is VMNHEMRTPM…TAIFIVKLGI (238 aa). His351 carries the post-translational modification Phosphohistidine; by autocatalysis. The Response regulatory domain occupies 613 to 730; it reads KVLIMDDNGF…KMRSVLSELL (118 aa). Residue Asp661 is modified to 4-aspartylphosphate.

It belongs to the ethylene receptor family. Homodimer; disulfide-linked. Requires Cu cation as cofactor. Post-translationally, activation probably requires a transfer of a phosphate group between a His in the transmitter domain and an Asp of the receiver domain.

It localises to the endoplasmic reticulum membrane. The catalysed reaction is ATP + protein L-histidine = ADP + protein N-phospho-L-histidine.. Functionally, may act early in the ethylene signal transduction pathway, possibly as an ethylene receptor, or as a regulator of the pathway. The chain is Ethylene receptor (ETR1) from Nicotiana tabacum (Common tobacco).